We begin with the raw amino-acid sequence, 553 residues long: Transmembrane protein DDB_G0292058 (553 aa).

An N-terminal signal peptide occupies residues 1-26; sequence MIKINKILSLLIILLIINCNYQFVKA. 2 helical membrane-spanning segments follow: residues 80-100 and 137-157; these read ILLS…GIIF and VFIL…VFIT. Asn162, Asn171, Asn178, and Asn195 each carry an N-linked (GlcNAc...) asparagine glycan. Transmembrane regions (helical) follow at residues 243–263 and 274–294; these read IIIV…VSAL and SIAL…HYPI. Asn315, Asn332, Asn351, Asn396, Asn405, and Asn462 each carry an N-linked (GlcNAc...) asparagine glycan. The helical transmembrane segment at 515–535 threads the bilayer; the sequence is LLIAPTAVFAILLTGLGITGI.

It localises to the membrane. The polypeptide is Transmembrane protein DDB_G0292058 (Dictyostelium discoideum (Social amoeba)).